The following is a 114-amino-acid chain: uncharacterized protein (114 aa).

The region spanning 6-114 (IFKNIIQRKI…LGGKKLKSFS (109 aa)) is the HIT domain.

This is an uncharacterized protein from Buchnera aphidicola subsp. Acyrthosiphon pisum (strain APS) (Acyrthosiphon pisum symbiotic bacterium).